Reading from the N-terminus, the 902-residue chain is DNA mismatch repair protein MutS (902 aa).

654–661 is an ATP binding site; the sequence is GPNMGGKS.

The protein belongs to the DNA mismatch repair MutS family.

In terms of biological role, this protein is involved in the repair of mismatches in DNA. It is possible that it carries out the mismatch recognition step. This protein has a weak ATPase activity. The polypeptide is DNA mismatch repair protein MutS (Xanthomonas axonopodis pv. citri (strain 306)).